A 200-amino-acid chain; its full sequence is Imidazole glycerol phosphate synthase subunit HisH (200 aa).

One can recognise a Glutamine amidotransferase type-1 domain in the interval 3 to 200; it reads DVALIDAGGA…LRNFLEMSFP (198 aa). Catalysis depends on cysteine 78, which acts as the Nucleophile. Active-site residues include histidine 179 and glutamate 181.

In terms of assembly, heterodimer of HisH and HisF.

It localises to the cytoplasm. It catalyses the reaction 5-[(5-phospho-1-deoxy-D-ribulos-1-ylimino)methylamino]-1-(5-phospho-beta-D-ribosyl)imidazole-4-carboxamide + L-glutamine = D-erythro-1-(imidazol-4-yl)glycerol 3-phosphate + 5-amino-1-(5-phospho-beta-D-ribosyl)imidazole-4-carboxamide + L-glutamate + H(+). The enzyme catalyses L-glutamine + H2O = L-glutamate + NH4(+). It functions in the pathway amino-acid biosynthesis; L-histidine biosynthesis; L-histidine from 5-phospho-alpha-D-ribose 1-diphosphate: step 5/9. Functionally, IGPS catalyzes the conversion of PRFAR and glutamine to IGP, AICAR and glutamate. The HisH subunit catalyzes the hydrolysis of glutamine to glutamate and ammonia as part of the synthesis of IGP and AICAR. The resulting ammonia molecule is channeled to the active site of HisF. This is Imidazole glycerol phosphate synthase subunit HisH from Xanthomonas axonopodis pv. citri (strain 306).